Consider the following 211-residue polypeptide: uncharacterized protein (211 aa).

This is an uncharacterized protein from Acidianus convivator (ATV).